The following is a 350-amino-acid chain: Tetraacyldisaccharide 4'-kinase (350 aa).

49-56 (TTGGTGKT) is a binding site for ATP.

This sequence belongs to the LpxK family.

The enzyme catalyses a lipid A disaccharide + ATP = a lipid IVA + ADP + H(+). The protein operates within glycolipid biosynthesis; lipid IV(A) biosynthesis; lipid IV(A) from (3R)-3-hydroxytetradecanoyl-[acyl-carrier-protein] and UDP-N-acetyl-alpha-D-glucosamine: step 6/6. Transfers the gamma-phosphate of ATP to the 4'-position of a tetraacyldisaccharide 1-phosphate intermediate (termed DS-1-P) to form tetraacyldisaccharide 1,4'-bis-phosphate (lipid IVA). This Chlorobaculum tepidum (strain ATCC 49652 / DSM 12025 / NBRC 103806 / TLS) (Chlorobium tepidum) protein is Tetraacyldisaccharide 4'-kinase.